The chain runs to 428 residues: Enolase (428 aa).

Gln165 contributes to the (2R)-2-phosphoglycerate binding site. Glu207 acts as the Proton donor in catalysis. Positions 244, 283, and 310 each coordinate Mg(2+). 4 residues coordinate (2R)-2-phosphoglycerate: Lys335, Arg364, Ser365, and Lys386. Lys335 functions as the Proton acceptor in the catalytic mechanism.

Belongs to the enolase family. Mg(2+) is required as a cofactor.

It localises to the cytoplasm. The protein resides in the secreted. It is found in the cell surface. It carries out the reaction (2R)-2-phosphoglycerate = phosphoenolpyruvate + H2O. The protein operates within carbohydrate degradation; glycolysis; pyruvate from D-glyceraldehyde 3-phosphate: step 4/5. Functionally, catalyzes the reversible conversion of 2-phosphoglycerate (2-PG) into phosphoenolpyruvate (PEP). It is essential for the degradation of carbohydrates via glycolysis. This chain is Enolase, found in Chlamydia pneumoniae (Chlamydophila pneumoniae).